The primary structure comprises 452 residues: Probable diguanylate cyclase DgcT (452 aa).

Over 1–7 the chain is Cytoplasmic; it reads MEKDYLR. A helical transmembrane segment spans residues 8–28; that stretch reads ISSTVLVSLLFGLALVLVNSW. Topologically, residues 29–45 are periplasmic; it reads FNQPGVEEVVPRSTYLM. Residues 46–66 form a helical membrane-spanning segment; the sequence is VMIALFFIDTVAFIFMQLYFI. At 67 to 74 the chain is on the cytoplasmic side; the sequence is YDRRQFSN. Residues 75 to 95 form a helical membrane-spanning segment; it reads CVLSLAFLSCLIYFVITVIII. The Periplasmic portion of the chain corresponds to 96-111; the sequence is QQIIEERLTSSVVQND. The helical transmembrane segment at 112–132 threads the bilayer; it reads IAIYYLFRQMSLCILIFLALV. The Cytoplasmic portion of the chain corresponds to 133–148; it reads NKVSENTKQRNLFSKK. The chain crosses the membrane as a helical span at residues 149-169; it reads MTLCISLFFVFGGPIVAHILS. The Periplasmic portion of the chain corresponds to 170 to 195; sequence SHYESYNLHIAELTNENGQVVWKASY. A helical membrane pass occupies residues 196-216; sequence VTIMIFMWLTLLSVNLYFNGL. Residues 217–219 lie on the Cytoplasmic side of the membrane; that stretch reads RYD. Residues 220–240 form a helical membrane-spanning segment; it reads IWNGVTVIAFCAVLYNISLLF. At 241-254 the chain is on the periplasmic side; sequence MSRYSVSTWYISRT. A helical transmembrane segment spans residues 255–275; it reads IEVVSKLTVMVIFMCHIFSAL. The Cytoplasmic segment spans residues 276–452; the sequence is RVTKNIAHRD…RDVVNFCESP (177 aa). Residues 310–445 enclose the GGDEF domain; sequence TPYCVMIMDI…GRNKVVVRDV (136 aa). Residues Asp-318 and Ile-319 each contribute to the Mg(2+) site. The substrate site is built by Asn-326, His-331, and Asp-335. Position 361 (Glu-361) interacts with Mg(2+). Residue Glu-361 is the Proton acceptor of the active site. Arg-381 is a binding site for substrate.

In terms of assembly, homodimer. It depends on Mg(2+) as a cofactor.

It localises to the cell inner membrane. It carries out the reaction 2 GTP = 3',3'-c-di-GMP + 2 diphosphate. It functions in the pathway purine metabolism; 3',5'-cyclic di-GMP biosynthesis. Probably catalyzes the synthesis of cyclic-di-GMP (c-di-GMP) via the condensation of 2 GTP molecules. Overexpression leads to a strong repression of swimming; swimming returns to normal when residues 359-360 are both mutated to Ala. Overexpression also leads to a 20-fold increase in c-di-GMP levels in vivo. Cyclic-di-GMP is a second messenger which controls cell surface-associated traits in bacteria. This Escherichia coli (strain K12) protein is Probable diguanylate cyclase DgcT.